Reading from the N-terminus, the 278-residue chain is Large ribosomal subunit protein uL2 (278 aa).

2 disordered regions span residues 1 to 58 (MGIR…GGGH) and 210 to 278 (GRMR…GKKR). Residues 23–33 (EVTRSEPEKSL) show a composition bias toward basic and acidic residues. Residues 40–49 (SGGRNSTGRI) are compositionally biased toward low complexity. 2 stretches are compositionally biased toward basic residues: residues 210–220 (GRMRWKGKRPS) and 269–278 (VRRRRTGKKR).

Belongs to the universal ribosomal protein uL2 family. As to quaternary structure, part of the 50S ribosomal subunit. Forms a bridge to the 30S subunit in the 70S ribosome.

One of the primary rRNA binding proteins. Required for association of the 30S and 50S subunits to form the 70S ribosome, for tRNA binding and peptide bond formation. It has been suggested to have peptidyltransferase activity; this is somewhat controversial. Makes several contacts with the 16S rRNA in the 70S ribosome. This is Large ribosomal subunit protein uL2 from Beutenbergia cavernae (strain ATCC BAA-8 / DSM 12333 / CCUG 43141 / JCM 11478 / NBRC 16432 / NCIMB 13614 / HKI 0122).